Reading from the N-terminus, the 261-residue chain is Succinate dehydrogenase [ubiquinone] iron-sulfur subunit, mitochondrial (261 aa).

The 2Fe-2S ferredoxin-type domain occupies 31-122; sequence FKIYRWNPDT…DVKIYPLPHM (92 aa). [2Fe-2S] cluster-binding residues include Cys-82, Cys-87, Cys-90, and Cys-102. A 4Fe-4S ferredoxin-type domain is found at 164 to 194; sequence DRKKLDGLYECILCACCSTACPSYWWNNEQY. [4Fe-4S] cluster-binding residues include Cys-174, Cys-177, and Cys-180. Cys-184 is a [3Fe-4S] cluster binding site. Residue Trp-189 coordinates a ubiquinone. [3Fe-4S] cluster is bound by residues Cys-231 and Cys-237. Position 241 (Cys-241) interacts with [4Fe-4S] cluster.

This sequence belongs to the succinate dehydrogenase/fumarate reductase iron-sulfur protein family. In terms of assembly, component of complex II composed of four subunits: a flavoprotein (FP), an iron-sulfur protein (IP), and a cytochrome b composed of a large and a small subunit. [2Fe-2S] cluster is required as a cofactor. It depends on [3Fe-4S] cluster as a cofactor. [4Fe-4S] cluster serves as cofactor.

It localises to the mitochondrion inner membrane. The enzyme catalyses a quinone + succinate = fumarate + a quinol. The protein operates within carbohydrate metabolism; tricarboxylic acid cycle; fumarate from succinate (eukaryal route): step 1/1. Iron-sulfur protein (IP) subunit of succinate dehydrogenase (SDH) that is involved in complex II of the mitochondrial electron transport chain and is responsible for transferring electrons from succinate to ubiquinone (coenzyme Q). The polypeptide is Succinate dehydrogenase [ubiquinone] iron-sulfur subunit, mitochondrial (SDH2) (Eremothecium gossypii (strain ATCC 10895 / CBS 109.51 / FGSC 9923 / NRRL Y-1056) (Yeast)).